The chain runs to 262 residues: MHFFDTHTHLNYLQQFTGEPLSQLIDNAKQADVQKILVVAVKEADFKTIQNMTALFPDNLCYGLGLHPLYIQEHAENDLILLEQALKNRDTNCTAVAEIGLERAIPDLLTDELWAKQCHFFESQLYLAKQFNLPVNIHSRKTHDQIFTFLKRIPLSKLGVVHGFSGSYDQAKRFVDLGYKIGVGGTITYERANKTRQAIAKLPLDALVLETDSPDMPVFGFQGQPNRPERIVESFKALCTLRNEPAELIKKLTWENACQIFS.

6 residues coordinate a divalent metal cation: H7, H9, E98, H138, H162, and D212.

Belongs to the metallo-dependent hydrolases superfamily. TatD-type hydrolase family. Requires a divalent metal cation as cofactor.

This is an uncharacterized protein from Haemophilus influenzae (strain ATCC 51907 / DSM 11121 / KW20 / Rd).